Reading from the N-terminus, the 283-residue chain is Protease HtpX (283 aa).

2 helical membrane passes run 4–24 and 33–53; these read ILLF…ILSV and GGIL…SLFL. Position 139 (histidine 139) interacts with Zn(2+). Glutamate 140 is an active-site residue. Histidine 143 lines the Zn(2+) pocket. The next 2 membrane-spanning stretches (helical) occupy residues 147–167 and 190–210; these read GDMV…IFLS and IYFL…SIIA. Position 218 (glutamate 218) interacts with Zn(2+).

The protein belongs to the peptidase M48B family. Zn(2+) is required as a cofactor.

The protein localises to the cell inner membrane. The sequence is that of Protease HtpX from Haemophilus influenzae (strain PittGG).